The sequence spans 367 residues: Alanine racemase (367 aa).

The Proton acceptor; specific for D-alanine role is filled by lysine 40. Lysine 40 carries the N6-(pyridoxal phosphate)lysine modification. Substrate is bound at residue arginine 136. Tyrosine 263 serves as the catalytic Proton acceptor; specific for L-alanine. Methionine 310 provides a ligand contact to substrate.

The protein belongs to the alanine racemase family. The cofactor is pyridoxal 5'-phosphate.

The enzyme catalyses L-alanine = D-alanine. Its pathway is amino-acid biosynthesis; D-alanine biosynthesis; D-alanine from L-alanine: step 1/1. Functionally, catalyzes the interconversion of L-alanine and D-alanine. May also act on other amino acids. This chain is Alanine racemase (alr), found in Streptococcus thermophilus (strain CNRZ 1066).